The following is a 518-amino-acid chain: Apolipoprotein N-acyltransferase (518 aa).

The next 6 helical transmembrane spans lie at 22–42 (LAFI…LWII), 63–83 (FFHW…WVHV), 101–121 (ALLA…LAWF), 134–154 (LLFP…LTGF), 174–194 (IIGA…LALC), and 202–222 (LLIL…LSQI). The CN hydrolase domain maps to 234–484 (VQGNIPQSMK…TGVLSATIPL (251 aa)). Glu-273 serves as the catalytic Proton acceptor. Lys-343 is a catalytic residue. Cys-395 acts as the Nucleophile in catalysis. A helical transmembrane segment spans residues 492–512 (AKIGQTPLLILCGALLLVGFI).

The protein belongs to the CN hydrolase family. Apolipoprotein N-acyltransferase subfamily.

The protein resides in the cell inner membrane. The catalysed reaction is N-terminal S-1,2-diacyl-sn-glyceryl-L-cysteinyl-[lipoprotein] + a glycerophospholipid = N-acyl-S-1,2-diacyl-sn-glyceryl-L-cysteinyl-[lipoprotein] + a 2-acyl-sn-glycero-3-phospholipid + H(+). It functions in the pathway protein modification; lipoprotein biosynthesis (N-acyl transfer). Catalyzes the phospholipid dependent N-acylation of the N-terminal cysteine of apolipoprotein, the last step in lipoprotein maturation. In Shewanella oneidensis (strain ATCC 700550 / JCM 31522 / CIP 106686 / LMG 19005 / NCIMB 14063 / MR-1), this protein is Apolipoprotein N-acyltransferase.